Reading from the N-terminus, the 143-residue chain is UPF0306 protein plu4501 (143 aa).

It belongs to the UPF0306 family.

In Photorhabdus laumondii subsp. laumondii (strain DSM 15139 / CIP 105565 / TT01) (Photorhabdus luminescens subsp. laumondii), this protein is UPF0306 protein plu4501.